The primary structure comprises 493 residues: uncharacterized protein (493 aa).

The disordered stretch occupies residues 96-124 (TTVAKASPPPAKPASAPTEITWKGSPQFT).

This is an uncharacterized protein from Caulobacter vibrioides (strain ATCC 19089 / CIP 103742 / CB 15) (Caulobacter crescentus).